The primary structure comprises 378 residues: 3-dehydroquinate synthase (378 aa).

Residues 115–119 (GVVGD), 139–140 (TS), lysine 152, and lysine 161 contribute to the NAD(+) site. Zn(2+) contacts are provided by glutamate 194, histidine 256, and histidine 275.

The protein belongs to the sugar phosphate cyclases superfamily. Dehydroquinate synthase family. Requires Co(2+) as cofactor. The cofactor is Zn(2+). It depends on NAD(+) as a cofactor.

It localises to the cytoplasm. It carries out the reaction 7-phospho-2-dehydro-3-deoxy-D-arabino-heptonate = 3-dehydroquinate + phosphate. Its pathway is metabolic intermediate biosynthesis; chorismate biosynthesis; chorismate from D-erythrose 4-phosphate and phosphoenolpyruvate: step 2/7. In terms of biological role, catalyzes the conversion of 3-deoxy-D-arabino-heptulosonate 7-phosphate (DAHP) to dehydroquinate (DHQ). In Brucella suis (strain ATCC 23445 / NCTC 10510), this protein is 3-dehydroquinate synthase.